We begin with the raw amino-acid sequence, 1155 residues long: DNA-directed RNA polymerase subunit beta (1155 aa).

This sequence belongs to the RNA polymerase beta chain family. As to quaternary structure, the RNAP catalytic core consists of 2 alpha, 1 beta, 1 beta' and 1 omega subunit. When a sigma factor is associated with the core the holoenzyme is formed, which can initiate transcription.

It carries out the reaction RNA(n) + a ribonucleoside 5'-triphosphate = RNA(n+1) + diphosphate. DNA-dependent RNA polymerase catalyzes the transcription of DNA into RNA using the four ribonucleoside triphosphates as substrates. In Borrelia garinii subsp. bavariensis (strain ATCC BAA-2496 / DSM 23469 / PBi) (Borreliella bavariensis), this protein is DNA-directed RNA polymerase subunit beta.